The sequence spans 380 residues: PqqA peptide cyclase (380 aa).

A Radical SAM core domain is found at 12–228 (FGIPLAVLLE…EEARERLKGR (217 aa)). 3 residues coordinate [4Fe-4S] cluster: Cys26, Cys30, and Cys33.

Belongs to the radical SAM superfamily. PqqE family. Interacts with PqqD. The interaction is necessary for activity of PqqE. It depends on [4Fe-4S] cluster as a cofactor.

It carries out the reaction [PQQ precursor protein] + S-adenosyl-L-methionine = E-Y cross-linked-[PQQ precursor protein] + 5'-deoxyadenosine + L-methionine + H(+). It participates in cofactor biosynthesis; pyrroloquinoline quinone biosynthesis. Catalyzes the cross-linking of a glutamate residue and a tyrosine residue in the PqqA protein as part of the biosynthesis of pyrroloquinoline quinone (PQQ). This Bradyrhizobium diazoefficiens (strain JCM 10833 / BCRC 13528 / IAM 13628 / NBRC 14792 / USDA 110) protein is PqqA peptide cyclase.